A 251-amino-acid polypeptide reads, in one-letter code: Triosephosphate isomerase (251 aa).

9 to 11 (NWK) lines the substrate pocket. Histidine 95 (electrophile) is an active-site residue. Glutamate 167 acts as the Proton acceptor in catalysis. Residues glycine 173, serine 212, and 233 to 234 (GG) each bind substrate.

This sequence belongs to the triosephosphate isomerase family. In terms of assembly, homodimer.

It is found in the cytoplasm. The enzyme catalyses D-glyceraldehyde 3-phosphate = dihydroxyacetone phosphate. It participates in carbohydrate biosynthesis; gluconeogenesis. Its pathway is carbohydrate degradation; glycolysis; D-glyceraldehyde 3-phosphate from glycerone phosphate: step 1/1. In terms of biological role, involved in the gluconeogenesis. Catalyzes stereospecifically the conversion of dihydroxyacetone phosphate (DHAP) to D-glyceraldehyde-3-phosphate (G3P). The protein is Triosephosphate isomerase of Pseudomonas fluorescens (strain ATCC BAA-477 / NRRL B-23932 / Pf-5).